The primary structure comprises 62 residues: Large ribosomal subunit protein eL37 (62 aa).

Cys20, Cys23, Cys35, and Cys38 together coordinate Zn(2+). The segment at 20 to 38 (CRRCGRKAFNVKKGYCAAC) adopts a C4-type zinc-finger fold.

This sequence belongs to the eukaryotic ribosomal protein eL37 family. Requires Zn(2+) as cofactor.

In terms of biological role, binds to the 23S rRNA. This is Large ribosomal subunit protein eL37 (rpl37e) from Pyrococcus abyssi (strain GE5 / Orsay).